We begin with the raw amino-acid sequence, 158 residues long: Phosphopantetheine adenylyltransferase (158 aa).

A substrate-binding site is contributed by Thr-8. ATP is bound by residues 8 to 9 (TF) and His-16. Positions 40, 72, and 86 each coordinate substrate. Residues 87 to 89 (GLR), Glu-97, and 122 to 128 (HAFISSS) each bind ATP.

The protein belongs to the bacterial CoaD family. As to quaternary structure, homohexamer. Requires Mg(2+) as cofactor.

It is found in the cytoplasm. It carries out the reaction (R)-4'-phosphopantetheine + ATP + H(+) = 3'-dephospho-CoA + diphosphate. It functions in the pathway cofactor biosynthesis; coenzyme A biosynthesis; CoA from (R)-pantothenate: step 4/5. In terms of biological role, reversibly transfers an adenylyl group from ATP to 4'-phosphopantetheine, yielding dephospho-CoA (dPCoA) and pyrophosphate. This Campylobacter jejuni subsp. jejuni serotype O:6 (strain 81116 / NCTC 11828) protein is Phosphopantetheine adenylyltransferase.